An 85-amino-acid chain; its full sequence is HssA/B-like protein 62 (85 aa).

This sequence belongs to the hssA/B family.

The protein is HssA/B-like protein 62 (hssl62) of Dictyostelium discoideum (Social amoeba).